We begin with the raw amino-acid sequence, 516 residues long: Homeobox protein 6 (516 aa).

The segment covering 22–31 (NYDFDNKNNS) has biased composition (low complexity). Disordered regions lie at residues 22–140 (NYDF…PNCN), 200–256 (SLNN…SSPS), and 268–348 (DEND…NNGD). Positions 32–41 (IGGGGGGGGS) are enriched in gly residues. 3 stretches are compositionally biased toward low complexity: residues 42-59 (SSSR…SSSG), 66-78 (SNSS…IINS), and 101-132 (TTTT…NSSS). The span at 284–346 (NNNNNNNNNN…NNNNTNTNNN (63 aa)) shows a compositional bias: low complexity. DNA-binding regions (homeobox) lie at residues 362–421 (KSGQ…SKSG) and 424–483 (SYAK…NKLS). Positions 483-516 (SSKAIQDKDNQDNDNNNSNNNENNDDSYSDEGLF) are disordered. Residues 495 to 504 (NDNNNSNNNE) show a composition bias toward low complexity. Residues 505 to 516 (NNDDSYSDEGLF) show a composition bias toward acidic residues.

The protein localises to the nucleus. Its function is as follows. Putative transcription factor. This is Homeobox protein 6 (hbx6) from Dictyostelium discoideum (Social amoeba).